Reading from the N-terminus, the 2213-residue chain is Protein sidekick-1 (2213 aa).

The segment at 1-73 (MARGARPSAA…GAGRCGGRRA (73 aa)) is disordered. The segment covering 23–38 (AGPGRPRGSPPGRARP) has biased composition (low complexity). 5 Ig-like C2-type domains span residues 104 to 186 (PYFK…SEVQ), 191 to 277 (GSFM…SPFI), 293 to 378 (PTIV…RATA), 386 to 476 (PYFT…LDVT), and 480 to 569 (PVFT…ATLT). A disulfide bond links Cys126 and Cys169. Residues Asn271 and Asn301 are each glycosylated (N-linked (GlcNAc...) asparagine). 3 disulfides stabilise this stretch: Cys315/Cys362, Cys408/Cys458, and Cys501/Cys553. Residues Asn550, Asn563, and Asn572 are each glycosylated (N-linked (GlcNAc...) asparagine). The Ig-like C2-type 6 domain occupies 574–663 (TSIVHPPEDH…GNDSRMARLE (90 aa)). Cys595 and Cys647 are disulfide-bonded. Asn655, Asn679, Asn782, Asn821, Asn882, Asn1015, and Asn1024 each carry an N-linked (GlcNAc...) asparagine glycan. 13 Fibronectin type-III domains span residues 670–766 (SPQN…LPEE), 771–867 (PPKN…TLQG), 872–970 (PPQN…TQED), 974–1068 (AVGH…VPPD), 1072–1171 (APSN…TLQA), 1176–1274 (APTS…TRES), 1279–1376 (APEN…TKDD), 1380–1474 (PPVR…TEKR), 1479–1576 (PPRE…TLQD), 1581–1699 (PPGS…VGEA), 1704–1800 (APQN…THQA), 1804–1899 (APSF…AGPA), and 1902–2000 (SPGS…SAQV). 2 N-linked (GlcNAc...) asparagine glycosylation sites follow: Asn1282 and Asn1333. N-linked (GlcNAc...) asparagine glycans are attached at residues Asn1654, Asn1748, Asn1767, Asn1819, and Asn1893. Residues 2010 to 2030 (FLLVMALSSLIVILLVVFALV) traverse the membrane as a helical segment. The Cytoplasmic portion of the chain corresponds to 2031–2213 (LHGQNKKYKN…TPLTGFSSFV (183 aa)). Residues 2075–2098 (STFSKKNGTRSPPRPSPGGLHYSD) are disordered. Positions 2207 to 2213 (TGFSSFV) match the PDZ-binding motif.

This sequence belongs to the sidekick family. As to quaternary structure, homodimer; mediates homophilic interactions to promote cell adhesion. In terms of tissue distribution, up-regulated in glomeruli in HIV-associated nephropathy. In diseased glomeruli, significantly overexpressed and the expression is no longer restricted to mesangial cells but includes podocytes and parietal epithelial cells.

It localises to the cell membrane. Its subcellular location is the synapse. In terms of biological role, adhesion molecule that promotes lamina-specific synaptic connections in the retina. Expressed in specific subsets of interneurons and retinal ganglion cells (RGCs) and promotes synaptic connectivity via homophilic interactions. This chain is Protein sidekick-1, found in Homo sapiens (Human).